Consider the following 344-residue polypeptide: Lipase chaperone (344 aa).

The chain crosses the membrane as a helical span at residues 14–34 (VAVYGAVGLAAIAGVAIWSGA). The span at 45-57 (LSADAAARDGASA) shows a compositional bias: low complexity. The segment at 45 to 78 (LSADAAARDGASAAPPPPARPASAGMPSPLAGSS) is disordered.

Belongs to the lipase chaperone family.

Its subcellular location is the cell inner membrane. Functionally, may be involved in the folding of the extracellular lipase during its passage through the periplasm. The sequence is that of Lipase chaperone from Burkholderia ambifaria (strain ATCC BAA-244 / DSM 16087 / CCUG 44356 / LMG 19182 / AMMD) (Burkholderia cepacia (strain AMMD)).